Consider the following 368-residue polypeptide: Agmatine deiminase (368 aa).

Cys-357 functions as the Amidino-cysteine intermediate in the catalytic mechanism.

It belongs to the agmatine deiminase family. Homodimer.

It catalyses the reaction agmatine + H2O = N-carbamoylputrescine + NH4(+). The protein operates within amine and polyamine biosynthesis; putrescine biosynthesis via agmatine pathway; N-carbamoylputrescine from agmatine: step 1/1. Mediates the hydrolysis of agmatine into N-carbamoylputrescine in the arginine decarboxylase (ADC) pathway of putrescine biosynthesis, a basic polyamine. The protein is Agmatine deiminase of Pseudomonas syringae pv. syringae (strain B728a).